An 824-amino-acid polypeptide reads, in one-letter code: Intraflagellar transport protein 88 homolog (824 aa).

Disordered regions lie at residues 1-27 and 111-134; these read MENVHLAPETDEDDLYSGFNDYNPAYD and AFDPLGQSRGPAPPLEAKNEDSPE. TPR repeat units follow at residues 196–229, 232–265, 271–304, 415–448, 450–483, 484–517, 518–551, 552–585, 586–619, 620–653, and 654–687; these read YSVLFNLASQYSANEMYAEALNTYQVIVKNKMFS, GRLKVNMGNIYLKQRNYSKAIKFYRMALDQIPSV, IKIMQNIGITFIKTGQYSDAINSFEHIMSMAPSL, NDLEINKAITYLRQKDFNQAVDTLKMFEKKDSRV, SAAATNLSFLYYLENEFAQASSYADLAVNSDRYN, PSALTNKGNTVFANGDYEKAAEFYKEALRNDSSC, TEALYNIGLTYKKLNRLDEALDSFLKLHAILRNS, AQVLCQIANIYELMEDPNQAIEWLMQLISVVPTD, SQALSKLGELYDSEGDKSQAFQYYYESYRYFPSN, IEVIEWLGAYYIDTQFCEKAIQYFERASLIQPTQ, and VKWQLMVASCFRRSGNYQKALDTYKEIHRKFPEN. A compositionally biased stretch (basic and acidic residues) spans 721 to 731; it reads EMREQRIKSGR. The segment at 721 to 824 is disordered; sequence EMREQRIKSG…EELGDDLLPE (104 aa). The segment covering 748 to 757 has biased composition (polar residues); that stretch reads DSGQNNSASS. Positions 797–808 are enriched in basic and acidic residues; the sequence is ERPKTAAKKRID. The segment covering 809 to 824 has biased composition (acidic residues); the sequence is EDDFADEELGDDLLPE.

As to quaternary structure, component of the IFT complex B, at least composed of IFT20, IFT22, IFT25, IFT27, IFT46, IFT52, TRAF3IP1/IFT54, IFT57, IFT74, IFT80, IFT81, and IFT88. Interacts with IFT20, IFT22, IFT25, IFT27, IFT52, TRAF3IP1, IFT74, IFT80 and IFT81. Interacts with IFT172. Interacts with IFT57. Interacts with IFT46. Interacts with IFT70B. Interacts with C2CD3. Interacts with ENTR1 (via N-terminus). Interacts with LRRC56. Interacts with DZIP1. Interacts with CCDC38. Interacts with CCDC146. Interacts with CFAP53. Testis.

It localises to the cytoplasm. It is found in the cytoskeleton. Its subcellular location is the microtubule organizing center. The protein localises to the centrosome. The protein resides in the centriole. It localises to the cilium basal body. It is found in the cell projection. Its subcellular location is the cilium. The protein localises to the flagellum. Positively regulates primary cilium biogenesis. Also involved in autophagy since it is required for trafficking of ATG16L and the expansion of the autophagic compartment. The sequence is that of Intraflagellar transport protein 88 homolog (Ift88) from Mus musculus (Mouse).